Consider the following 120-residue polypeptide: Alanine racemase (120 aa).

Tyr24 (proton acceptor; specific for L-alanine) is an active-site residue.

It belongs to the alanine racemase family. Homodimer. Pyridoxal 5'-phosphate is required as a cofactor.

It carries out the reaction L-alanine = D-alanine. In terms of biological role, highly specific to D- and L-alanine and does not catalyze the racemization of other amino acids. The protein is Alanine racemase of Penaeus monodon (Giant tiger prawn).